A 472-amino-acid chain; its full sequence is L-aspartate oxidase (472 aa).

FAD-binding positions include 7-10, 36-43, and aspartate 190; these read SGLA and SSYWAKGG. Arginine 256 serves as the catalytic Proton donor/acceptor. FAD contacts are provided by residues glutamate 332 and 348–349; that span reads SL.

The protein belongs to the FAD-dependent oxidoreductase 2 family. NadB subfamily. FAD serves as cofactor.

The protein resides in the cytoplasm. The catalysed reaction is L-aspartate + O2 = iminosuccinate + H2O2. The protein operates within cofactor biosynthesis; NAD(+) biosynthesis; iminoaspartate from L-aspartate (oxidase route): step 1/1. Its function is as follows. Catalyzes the oxidation of L-aspartate to iminoaspartate, the first step in the de novo biosynthesis of NAD(+). The sequence is that of L-aspartate oxidase (nadB) from Saccharolobus solfataricus (strain ATCC 35092 / DSM 1617 / JCM 11322 / P2) (Sulfolobus solfataricus).